A 199-amino-acid chain; its full sequence is Small ribosomal subunit protein uS14m (199 aa).

The tract at residues 28 to 67 is disordered; the sequence is LSTPAPEPAKPSSEETTESTEPATSVEDAGEPMKEKRITQ.

It belongs to the universal ribosomal protein uS14 family. In terms of assembly, component of the mitochondrial ribosome small subunit (28S) which comprises a 12S rRNA and about 30 distinct proteins. Interacts with LIAT1.

It is found in the mitochondrion. The polypeptide is Small ribosomal subunit protein uS14m (mrps-14) (Caenorhabditis elegans).